The primary structure comprises 158 residues: NADH-quinone oxidoreductase subunit B (158 aa).

[4Fe-4S] cluster-binding residues include Cys37, Cys38, Cys102, and Cys132.

It belongs to the complex I 20 kDa subunit family. NDH-1 is composed of 14 different subunits. Subunits NuoB, C, D, E, F, and G constitute the peripheral sector of the complex. The cofactor is [4Fe-4S] cluster.

It is found in the cell inner membrane. It catalyses the reaction a quinone + NADH + 5 H(+)(in) = a quinol + NAD(+) + 4 H(+)(out). In terms of biological role, NDH-1 shuttles electrons from NADH, via FMN and iron-sulfur (Fe-S) centers, to quinones in the respiratory chain. The immediate electron acceptor for the enzyme in this species is believed to be ubiquinone. Couples the redox reaction to proton translocation (for every two electrons transferred, four hydrogen ions are translocated across the cytoplasmic membrane), and thus conserves the redox energy in a proton gradient. The sequence is that of NADH-quinone oxidoreductase subunit B from Thioalkalivibrio sulfidiphilus (strain HL-EbGR7).